The chain runs to 426 residues: 3-phosphoshikimate 1-carboxyvinyltransferase (426 aa).

Residues lysine 22, serine 23, and arginine 27 each contribute to the 3-phosphoshikimate site. Lysine 22 is a binding site for phosphoenolpyruvate. Phosphoenolpyruvate-binding residues include glycine 96 and arginine 124. Residues serine 170, serine 171, glutamine 172, serine 198, aspartate 314, asparagine 337, and lysine 341 each coordinate 3-phosphoshikimate. Glutamine 172 contacts phosphoenolpyruvate. Aspartate 314 (proton acceptor) is an active-site residue. 3 residues coordinate phosphoenolpyruvate: arginine 345, arginine 387, and lysine 412.

This sequence belongs to the EPSP synthase family. In terms of assembly, monomer.

It is found in the cytoplasm. It carries out the reaction 3-phosphoshikimate + phosphoenolpyruvate = 5-O-(1-carboxyvinyl)-3-phosphoshikimate + phosphate. It participates in metabolic intermediate biosynthesis; chorismate biosynthesis; chorismate from D-erythrose 4-phosphate and phosphoenolpyruvate: step 6/7. In terms of biological role, catalyzes the transfer of the enolpyruvyl moiety of phosphoenolpyruvate (PEP) to the 5-hydroxyl of shikimate-3-phosphate (S3P) to produce enolpyruvyl shikimate-3-phosphate and inorganic phosphate. The chain is 3-phosphoshikimate 1-carboxyvinyltransferase from Aliivibrio fischeri (strain MJ11) (Vibrio fischeri).